Reading from the N-terminus, the 320-residue chain is Cytochrome f (320 aa).

Positions 1–32 are cleaved as a signal peptide; sequence MKTKKSYDKVTRWVTPPILMLIIIHIITGACS. Positions 36, 56, 59, and 60 each coordinate heme. A helical transmembrane segment spans residues 286 to 306; sequence IQGLLGFLASVVLAQIFLVLK.

This sequence belongs to the cytochrome f family. In terms of assembly, the 4 large subunits of the cytochrome b6-f complex are cytochrome b6, subunit IV (17 kDa polypeptide, petD), cytochrome f and the Rieske protein, while the 4 small subunits are PetG, PetL, PetM and PetN. The complex functions as a dimer. The cofactor is heme.

The protein resides in the plastid. The protein localises to the chloroplast thylakoid membrane. Component of the cytochrome b6-f complex, which mediates electron transfer between photosystem II (PSII) and photosystem I (PSI), cyclic electron flow around PSI, and state transitions. The sequence is that of Cytochrome f from Gnetum parvifolium (Small-leaved jointfir).